We begin with the raw amino-acid sequence, 217 residues long: Octanoyltransferase (217 aa).

The BPL/LPL catalytic domain maps to 32–207 (SDSPDELWIV…TLSQLLGYQQ (176 aa)). Substrate-binding positions include 71-78 (RGGQVTYH), 138-140 (SLG), and 151-153 (GLA). The active-site Acyl-thioester intermediate is the cysteine 169.

The protein belongs to the LipB family.

The protein localises to the cytoplasm. It catalyses the reaction octanoyl-[ACP] + L-lysyl-[protein] = N(6)-octanoyl-L-lysyl-[protein] + holo-[ACP] + H(+). Its pathway is protein modification; protein lipoylation via endogenous pathway; protein N(6)-(lipoyl)lysine from octanoyl-[acyl-carrier-protein]: step 1/2. In terms of biological role, catalyzes the transfer of endogenously produced octanoic acid from octanoyl-acyl-carrier-protein onto the lipoyl domains of lipoate-dependent enzymes. Lipoyl-ACP can also act as a substrate although octanoyl-ACP is likely to be the physiological substrate. The protein is Octanoyltransferase of Shewanella sp. (strain MR-7).